The chain runs to 427 residues: GTPase Obg (427 aa).

Positions 1–158 constitute an Obg domain; that stretch reads MFIDKAKIHL…LTVTLELKLI (158 aa). Residues 159–330 enclose the OBG-type G domain; it reads ADVGLVGFPN…LLDYVSIKLK (172 aa). Residues 165-172, 190-194, 212-215, 282-285, and 311-313 contribute to the GTP site; these read GFPNVGKS, FTTLT, DIPG, NKTD, and SAA. Mg(2+)-binding residues include serine 172 and threonine 192. The region spanning 347 to 427 is the OCT domain; that stretch reads LYELKEKDTN…IYDVEFEYFH (81 aa).

It belongs to the TRAFAC class OBG-HflX-like GTPase superfamily. OBG GTPase family. In terms of assembly, monomer. Mg(2+) serves as cofactor.

It localises to the cytoplasm. An essential GTPase which binds GTP, GDP and possibly (p)ppGpp with moderate affinity, with high nucleotide exchange rates and a fairly low GTP hydrolysis rate. Plays a role in control of the cell cycle, stress response, ribosome biogenesis and in those bacteria that undergo differentiation, in morphogenesis control. The sequence is that of GTPase Obg from Alkaliphilus metalliredigens (strain QYMF).